Consider the following 111-residue polypeptide: uncharacterized protein (111 aa).

The next 4 helical transmembrane spans lie at 3 to 23, 24 to 44, 54 to 74, and 80 to 100; these read WVLVFIAGLLEVVWASSLKHA, DSLLDWIIIFILIAVSFILLI, AAYTVFVGIGTVGTYLTGIVL, and AAQMFFLALLLAGILGMKLFT.

The protein belongs to the drug/metabolite transporter (DMT) superfamily. Small multidrug resistance (SMR) (TC 2.A.7.1) family.

It is found in the cell membrane. This is an uncharacterized protein from Bacillus subtilis (strain 168).